A 172-amino-acid polypeptide reads, in one-letter code: Stellate orphon protein at 12D (172 aa).

It belongs to the casein kinase 2 subunit beta family. As to quaternary structure, interacts in vitro with the casein kinase 2 alpha subunit (CkII-alpha). The relevance of such interaction is however unclear in vivo. As to expression, probably not expressed in wild-type flies. In males lacking the Y chromosome, it is testis-specific and constitutes the main component of star-shaped crystals.

Unknown. In males lacking the Y chromosome, its strong overexpression leads to the appearance of proteinaceous star-shaped crystals in the primary spermatocytes causing meiotic drive, possibly by interfering with normal casein kinase 2 activity. The sequence is that of Stellate orphon protein at 12D (Ste12DOR) from Drosophila melanogaster (Fruit fly).